A 412-amino-acid chain; its full sequence is uncharacterized protein (412 aa).

7 tandem repeats follow at residues 112–116, 117–121, 122–126, 127–131, 132–136, 137–141, and 142–146. The 7 X 5 AA tandem repeats of G-[NS]-[IV]-R-[DNS] stretch occupies residues 112 to 146; sequence GSIRSGSIRSGSIRDGSIRDGSIRSGNIRDGSVRS. Positions 116–126 are enriched in low complexity; the sequence is SGSIRSGSIRD. A disordered region spans residues 116-208; the sequence is SGSIRSGSIR…YSEKSIKPST (93 aa). Residues 192–208 are compositionally biased toward basic and acidic residues; sequence NHYAESEYSEKSIKPST.

The protein belongs to the asfivirus B407L family.

This is an uncharacterized protein from Ornithodoros (relapsing fever ticks).